Reading from the N-terminus, the 39-residue chain is Photosystem II reaction center protein L (39 aa).

A helical membrane pass occupies residues 18–38 (SLYWGLLLIFVLAVLFSNYFF).

The protein belongs to the PsbL family. As to quaternary structure, PSII is composed of 1 copy each of membrane proteins PsbA, PsbB, PsbC, PsbD, PsbE, PsbF, PsbH, PsbI, PsbJ, PsbK, PsbL, PsbM, PsbT, PsbX, PsbY, PsbZ, Psb30/Ycf12, at least 3 peripheral proteins of the oxygen-evolving complex and a large number of cofactors. It forms dimeric complexes.

It localises to the plastid thylakoid membrane. One of the components of the core complex of photosystem II (PSII). PSII is a light-driven water:plastoquinone oxidoreductase that uses light energy to abstract electrons from H(2)O, generating O(2) and a proton gradient subsequently used for ATP formation. It consists of a core antenna complex that captures photons, and an electron transfer chain that converts photonic excitation into a charge separation. This subunit is found at the monomer-monomer interface and is required for correct PSII assembly and/or dimerization. The chain is Photosystem II reaction center protein L from Cuscuta gronovii (Common dodder).